A 134-amino-acid chain; its full sequence is Putative pre-16S rRNA nuclease (134 aa).

It belongs to the YqgF nuclease family.

The protein localises to the cytoplasm. Its function is as follows. Could be a nuclease involved in processing of the 5'-end of pre-16S rRNA. The chain is Putative pre-16S rRNA nuclease from Helicobacter pylori (strain J99 / ATCC 700824) (Campylobacter pylori J99).